A 1231-amino-acid polypeptide reads, in one-letter code: Multifunctional 2-oxoglutarate metabolism enzyme (1231 aa).

Residues Met-1–Ser-41 are 2-oxoglutarate dehydrogenase E1, N-terminal part. Residues Val-38–Ala-79 are disordered. The tract at residues Pro-42–Ala-88 is linker. Residues Pro-58 to Pro-69 are compositionally biased toward low complexity. Positions Leu-89–Ser-337 are succinyltransferase E2. His-316 (proton acceptor; for succinyltransferase activity) is an active-site residue. The segment at Asp-338–Gly-1231 is 2-oxoglutarate dehydrogenase E1, C-terminal part. Arg-542 contacts thiamine diphosphate. 2-oxoglutarate contacts are provided by His-581 and Ser-606. Thiamine diphosphate contacts are provided by Ser-606, Leu-608, Asp-649, Ala-650, Ala-651, and Asn-682. Asp-649 provides a ligand contact to Mg(2+). Residues Asn-682 and Ile-684 each contribute to the Mg(2+) site. A coiled-coil region spans residues Asp-787–His-817. His-1024 contributes to the 2-oxoglutarate binding site. Positions 1042, 1058, 1093, 1096, 1146, 1153, and 1154 each coordinate acetyl-CoA.

This sequence belongs to the 2-oxoacid dehydrogenase family. Kgd subfamily. In terms of assembly, homodimer. The 2-oxoglutarate dehydrogenase (ODH) complex contains multiple copies of three enzymatic components: 2-oxoglutarate dehydrogenase (E1), dihydrolipoamide succinyltransferase (E2) and lipoamide dehydrogenase (E3). Mg(2+) serves as cofactor. Thiamine diphosphate is required as a cofactor.

It carries out the reaction glyoxylate + 2-oxoglutarate + H(+) = 2-hydroxy-3-oxoadipate + CO2. The enzyme catalyses 2-oxoglutarate + H(+) = succinate semialdehyde + CO2. It catalyses the reaction N(6)-[(R)-lipoyl]-L-lysyl-[protein] + 2-oxoglutarate + H(+) = N(6)-[(R)-S(8)-succinyldihydrolipoyl]-L-lysyl-[protein] + CO2. The catalysed reaction is N(6)-[(R)-dihydrolipoyl]-L-lysyl-[protein] + succinyl-CoA = N(6)-[(R)-S(8)-succinyldihydrolipoyl]-L-lysyl-[protein] + CoA. It participates in carbohydrate metabolism; tricarboxylic acid cycle; succinate from 2-oxoglutarate (transferase route): step 1/2. The protein operates within carbohydrate metabolism; tricarboxylic acid cycle; succinyl-CoA from 2-oxoglutarate (dehydrogenase route): step 1/1. Alpha-ketoglutarate dehydrogenase and decarboxylase activities are inhibited by unphosphorylated GarA, and allosterically activated by acetyl-CoA, the main substrate of the TCA cycle. Shows three enzymatic activities that share a first common step, the attack of thiamine-PP on 2-oxoglutarate (alpha-ketoglutarate, KG), leading to the formation of an enamine-thiamine-PP intermediate upon decarboxylation. Thus, displays KGD activity, catalyzing the decarboxylation from five-carbon 2-oxoglutarate to four-carbon succinate semialdehyde (SSA). Also catalyzes C-C bond formation between the activated aldehyde formed after decarboxylation of alpha-ketoglutarate and the carbonyl of glyoxylate (GLX), to yield 2-hydroxy-3-oxoadipate (HOA), which spontaneously decarboxylates to form 5-hydroxylevulinate (HLA). And is also a component of the 2-oxoglutarate dehydrogenase (ODH) complex, that catalyzes the overall conversion of 2-oxoglutarate to succinyl-CoA and CO(2). The KG decarboxylase and KG dehydrogenase reactions provide two alternative, tightly regulated, pathways connecting the oxidative and reductive branches of the TCA cycle. This Mycobacterium tuberculosis (strain ATCC 25177 / H37Ra) protein is Multifunctional 2-oxoglutarate metabolism enzyme (kgd).